The chain runs to 193 residues: uncharacterized protein (193 aa).

Residues 1 to 26 (MRNVFVGALCMCGMSFVFSDSVRSAA) form the signal peptide.

This is an uncharacterized protein from Treponema pallidum (strain Nichols).